We begin with the raw amino-acid sequence, 472 residues long: Type I restriction enzyme BthVORF4518P methylase subunit (472 aa).

Residues 151–156, 181–183, Asp-214, and 243–244 contribute to the S-adenosyl-L-methionine site; these read QYFTPR, TGG, and DS.

It belongs to the N(4)/N(6)-methyltransferase family. In terms of assembly, the type I restriction/modification system is composed of three polypeptides R, M and S; the restriction enzyme has stoichiometry R(2)M(2)S(1) while the methyltransferase is M(2)S(1).

The catalysed reaction is a 2'-deoxyadenosine in DNA + S-adenosyl-L-methionine = an N(6)-methyl-2'-deoxyadenosine in DNA + S-adenosyl-L-homocysteine + H(+). Functionally, the subtype gamma methyltransferase (M) subunit of a type I restriction enzyme. The M and S subunits together form a methyltransferase (MTase) that methylates two adenine residues of an undetermined sequence. In the presence of the R subunit the complex can also act as an endonuclease, binding to the same target sequence but cutting the DNA some distance from this site. Whether the DNA is cut or modified depends on the methylation state of the target sequence. When the target site is unmodified, the DNA is cut. When the target site is hemimethylated, the complex acts as a maintenance MTase modifying the DNA so that both strands become methylated. After locating a non-methylated recognition site, the enzyme complex serves as a molecular motor that translocates DNA in an ATP-dependent manner until a collision occurs that triggers cleavage. In Bacteroides thetaiotaomicron (strain ATCC 29148 / DSM 2079 / JCM 5827 / CCUG 10774 / NCTC 10582 / VPI-5482 / E50), this protein is Type I restriction enzyme BthVORF4518P methylase subunit.